The chain runs to 307 residues: Delta-9 acyl-lipid desaturase 2 (307 aa).

Positions 1–17 are enriched in polar residues; the sequence is MSVTSTVEENHQKNPST. The interval 1–21 is disordered; the sequence is MSVTSTVEENHQKNPSTPAAV. The chain crosses the membrane as a helical span at residues 53–73; that stretch reads LALLAPFYFTWSALWVTFLFY. Fe cation is bound by residues His85 and His90. Positions 85-90 match the Histidine box-1 motif; the sequence is HRNLAH. A helical membrane pass occupies residues 99–119; sequence LEYLLAYCALLAIQGDPIDWV. Fe cation contacts are provided by His122, His125, and His126. The Histidine box-2 motif lies at 122 to 126; that stretch reads HRYHH. 2 helical membrane-spanning segments follow: residues 182–202 and 204–224; these read VLFH…MSFV and WGMG…NSLC. The Fe cation site is built by His225, His254, His257, and His258. The Histidine box-3 motif lies at 254–258; it reads HNNHH.

It belongs to the fatty acid desaturase type 1 family. The cofactor is Fe cation. Strongly expressed in flowers, roots, leaves, seedpods, and inflorescence meristems.

Its subcellular location is the endoplasmic reticulum membrane. The enzyme catalyses a 1-hexacosanoyl-2-acyl-phosphoglycerolipid + 2 Fe(II)-[cytochrome b5] + O2 + 2 H(+) = a 1-[(17Z)-hexacos-17-enoyl]-2-acyl-phosphoglycerolipid + 2 Fe(III)-[cytochrome b5] + 2 H2O. It catalyses the reaction a 1-tetracosanoyl-2-acyl-phosphoglycerolipid + 2 Fe(II)-[cytochrome b5] + O2 + 2 H(+) = a 1-[(15Z)-tetracos-15-enoyl]-2-acyl-phosphoglycerolipid + 2 Fe(III)-[cytochrome b5] + 2 H2O. It participates in lipid metabolism; polyunsaturated fatty acid biosynthesis. Involved in delta-9 desaturation of fatty acids. Plays a role in the production of very-long-chain monounsaturated fatty acids (VLCMUFAs) in seed lipids and in membrane phospholipids and sphingolipids. Acts as C-16:0 desaturase for monogalactosyl diacylglycerol (MGDG) and phosphatidylglycerol (PG). Is an essential component for cold adaptation. Is essential to adjust the acyl composition of organelle membrane lipid composition in response to cold stress. The protein is Delta-9 acyl-lipid desaturase 2 of Arabidopsis thaliana (Mouse-ear cress).